The chain runs to 136 residues: Protein PsiE (136 aa).

4 helical membrane passes run 15 to 35 (ILQN…VVFL), 55 to 75 (YELV…ALIV), 83 to 103 (HFPL…LIIV), and 108 to 128 (PMDV…LWLC).

This sequence belongs to the PsiE family.

The protein localises to the cell inner membrane. This Salmonella agona (strain SL483) protein is Protein PsiE.